The following is an 827-amino-acid chain: Carnosine synthase 1 (827 aa).

In terms of domain architecture, ATP-grasp spans 516 to 720; sequence GPPWPSTSLH…LLLASTMVAC (205 aa). Residue 542-611 participates in ATP binding; sequence IYQVPLPGVM…MEFVEGTEHD (70 aa). Glutamate 677, glutamate 689, and asparagine 691 together coordinate Mg(2+). Residues glutamate 677, glutamate 689, and asparagine 691 each contribute to the Mn(2+) site.

Homotetramer. It depends on Mg(2+) as a cofactor. Mn(2+) serves as cofactor.

The catalysed reaction is beta-alanine + L-histidine + ATP = carnosine + ADP + phosphate + H(+). It catalyses the reaction 4-aminobutanoate + L-histidine + ATP = L-homocarnosine + ADP + phosphate + H(+). Catalyzes the synthesis of carnosine and homocarnosine. Carnosine is synthesized more efficiently than homocarnosine. This chain is Carnosine synthase 1, found in Mus musculus (Mouse).